A 759-amino-acid chain; its full sequence is Holliday junction resolvase YEN1 (759 aa).

Disordered regions lie at residues 62-83 (RSRSRSPTRSPRDSDIDSSQEY), 498-518 (SQSPLKRSNSPSRSKSPTRRQ), and 683-702 (KSRTTNAEKNPPESGLKSRS). A compositionally biased stretch (low complexity) spans 500 to 512 (SPLKRSNSPSRSK). Ser730 and Ser731 each carry phosphoserine.

This sequence belongs to the XPG/RAD2 endonuclease family. GEN subfamily.

Its subcellular location is the cytoplasm. The protein localises to the nucleus. In terms of biological role, endonuclease which resolves Holliday junctions by the introduction of symmetrically related cuts across the junction point, to produce nicked duplex products in which the nicks can be readily ligated. Four-way DNA intermediates, also known as Holliday junctions, are formed during homologous recombination and DNA repair, and their resolution is necessary for proper chromosome segregation. Involved in DNA-damage repair in vegetative cells. This chain is Holliday junction resolvase YEN1 (YEN1), found in Saccharomyces cerevisiae (strain ATCC 204508 / S288c) (Baker's yeast).